Reading from the N-terminus, the 60-residue chain is Naniproin (60 aa).

Intrachain disulfides connect Cys3-Cys21, Cys14-Cys38, Cys42-Cys53, and Cys54-Cys59.

This sequence belongs to the three-finger toxin family. Short-chain subfamily. Type IA cytotoxin sub-subfamily. Monomer in solution; Homodimer and oligomer in the presence of negatively charged lipids forming a pore with a size ranging between 20 and 30 angstroms. In terms of tissue distribution, expressed by the venom gland.

The protein localises to the secreted. It localises to the target cell membrane. In terms of biological role, basic protein that binds to cell membrane and depolarizes cardiomyocytes. This cytotoxin also possesses lytic activity on many other cells, including red blood cells. Interaction with sulfatides in the cell membrane induces pore formation and cell internalization and is responsible for cytotoxicity in cardiomyocytes. It targets the mitochondrial membrane and induces mitochondrial swelling and fragmentation. Inhibits protein kinases C. It binds to the integrin alpha-V/beta-3 with a moderate affinity. The chain is Naniproin from Naja nigricollis (Black-necked spitting cobra).